The chain runs to 646 residues: Beta-galactosidase-1-like protein (646 aa).

The signal sequence occupies residues 1–23; that stretch reads MPPDLPSLLLRLVVLLLLSQAEA. A glycan (N-linked (GlcNAc...) asparagine) is linked at Asn93. Glu182 serves as the catalytic Proton donor. An N-linked (GlcNAc...) asparagine glycan is attached at Asn239. The active-site Nucleophile is the Glu260.

This sequence belongs to the glycosyl hydrolase 35 family.

It localises to the secreted. Functionally, probable glycosyl hydrolase. This is Beta-galactosidase-1-like protein (Glb1l) from Mus musculus (Mouse).